The primary structure comprises 220 residues: Peptide methionine sulfoxide reductase MsrA (220 aa).

Residue Cys59 is part of the active site.

This sequence belongs to the MsrA Met sulfoxide reductase family.

It catalyses the reaction L-methionyl-[protein] + [thioredoxin]-disulfide + H2O = L-methionyl-(S)-S-oxide-[protein] + [thioredoxin]-dithiol. It carries out the reaction [thioredoxin]-disulfide + L-methionine + H2O = L-methionine (S)-S-oxide + [thioredoxin]-dithiol. In terms of biological role, has an important function as a repair enzyme for proteins that have been inactivated by oxidation. Catalyzes the reversible oxidation-reduction of methionine sulfoxide in proteins to methionine. This is Peptide methionine sulfoxide reductase MsrA from Corynebacterium kroppenstedtii (strain DSM 44385 / JCM 11950 / CIP 105744 / CCUG 35717).